The sequence spans 215 residues: Protein C' (215 aa).

The tract at residues 12-34 (MPSFLKKILKLRGRRQEDESRSR) is disordered. The involved in self-degradation and in host STAT1 degradation stretch occupies residues 15–22 (FLKKILKL).

This sequence belongs to the respirovirus protein C family. As to quaternary structure, the different isoforms interact (via C-terminus) with unphosphorylated and phosphorylated human STAT1 (via N-terminus), favoring the formation of parallel STAT1 homodimers. The different isoforms do not interact with host STAT2. C protein interacts with L protein; this interaction has an inhibitory effect on viral transcription and replication. In terms of processing, Y1 and Y2 proteins are produced not only by alternative initiation, but also by proteolytic cleavage of C'. Only alternative initiation is detected in vitro, whereas in vivo cleavage seems to be predominant.

Its subcellular location is the host cytoplasm. The different products prevent the establishment of cellular antiviral state by blocking the interferon-alpha/beta (IFN-alpha/beta) and IFN-gamma signaling pathways. They inhibit IFN-alpha/beta induced tyrosine phosphorylation of STAT1 and STAT2. Blocking the IFN-alpha/beta pathway requires binding to STAT1 in the cytoplasm. They inhibit IFN-gamma induced serine phosphorylation of STAT1. Block the IFN-gamma pathway by binding to and stabilizing the parallel form of the STAT1 dimer, further inducing high-molecular-weight complex formation and inhibition of transcription by IFN-gamma. May also have a role in preventing the cell to enter apoptosis. Modulate regulation of viral transcription and replication. Overexpression inhibits the viral RNA polymerase. The absence of all C', C, Y1 and Y2 proteins leads to viral delayed growth. Plays an important role in virion particles release. Modulates virion shape. In Sendai virus (strain Nagoya) (SeV), this protein is Protein C' (P/V/C).